Consider the following 341-residue polypeptide: Protein BEARSKIN2 (341 aa).

In terms of domain architecture, NAC spans 9–160 (VPPGFRFHPT…GWVVCRVFMK (152 aa)). A DNA-binding region spans residues 109 to 166 (IGMRKTLVFYKGRAPHGQKTDWIMHEYRLEDADDPQANPSEDGWVVCRVFMKKNLFKV).

As to expression, expressed throughout the root cap, in both columella (COL) and lateral root cap (LRC) cells, with higher levels in the COL-adjoining LRC than the upper LRC. Also present at low levels expression in the tips of cotyledons and the cotyledon vasculature, as weel as in vasculature of the first pair of true leaves and at the hydathodes.

The protein localises to the nucleus. Functionally, transcription activator. Together with BRN1 and SMB, regulates cellular maturation of root cap. Promotes the expression of genes involved in secondary cell walls (SCW) biosynthesis. In Arabidopsis thaliana (Mouse-ear cress), this protein is Protein BEARSKIN2 (BRN2).